The primary structure comprises 875 residues: MHPPPPDAGVAMDFGQNSLFGYMEDLQELTIIERPVRRSLKTPEEIERLTVDEDLSDIDRAVYLLSAGQDVQGASVIANLPFLMRQNPTETLRRVLPKVREVLHVASVEMQLTAAVSFLTILQEESMSVHTCAHSFLQVILLHLEHRDTGVSNAWLETLLSAVELLPKETLRHEILNPLVSKAQLSQTVQSRLVSCKILGKITNKFDAHSIKREILPLVKSLCQDVEYEVRSCMCRQLENIAQGIGAELTKNVVLPELIELSRDESGSVRLAAFETLVNMLDMFDTDDRSQTILPLVKSFCEKSFKADESILISLSFHLGKLCHGLYGIFTPDQHLRFLEFYKKLCTLGLQQENGHNESQIPSQIVEQEKKYTSVRKNCAYNFPAMIVFVDPKNFHMELYSTFFCLCHDPEVPVRHTIAICFYEVSKLLNSGVHLIHKELITLLQDESLEVLDALINHLPEILELMSTGGENSVQENKFSSVPDLIPALTAAEQRAAASLKWRTHEKLLQKYTCLPHIISSDQIYYRFLQRMFTIMMTNNVLPVQRAAARTLCIFLRYNRKQEQRHEVIQKLIEQLGQGKSYWNRLRFLDTCEFIIEIFSRSFFCKYFFLPVIELTHDPVANVRMKLCYLLPKVKSALKIPADMHLLQQLEMCVRKLLCQEKDKDVLAIVKKTVLELDRMEMSMDMFQKKNYEKDLLDQEKEREELLFLEMEQLEKEKHQSDGRLASDKSFEKKRRDSRTSTQSLSKNLPISVPGPSSSTASTSKEIKKSKLTRSQSFNNQAFHAKYGTLDKCASKSSTLAHTSSVSGLVRTAMLSLTDDSFRTRNASSVPASFSPNPVMPSTSRGPGNTADPKSSGSKDAQPRKATLKSRKSNP.

HEAT repeat units follow at residues 215–253 (ILPLVKSLCQDVEYEVRSCMCRQLENIAQGIGAELTKNV) and 254–292 (VLPELIELSRDESGSVRLAAFETLVNMLDMFDTDDRSQT). Positions 686-730 (MFQKKNYEKDLLDQEKEREELLFLEMEQLEKEKHQSDGRLASDKS) form a coiled coil. Positions 718–739 (KHQSDGRLASDKSFEKKRRDSR) are enriched in basic and acidic residues. Positions 718–773 (KHQSDGRLASDKSFEKKRRDSRTSTQSLSKNLPISVPGPSSSTASTSKEIKKSKLT) are disordered. The segment covering 740-764 (TSTQSLSKNLPISVPGPSSSTASTS) has biased composition (polar residues). Serine 777 bears the Phosphoserine mark. A Phosphothreonine modification is found at threonine 799. Polar residues predominate over residues 825-859 (RNASSVPASFSPNPVMPSTSRGPGNTADPKSSGSK). The interval 825–875 (RNASSVPASFSPNPVMPSTSRGPGNTADPKSSGSKDAQPRKATLKSRKSNP) is disordered. Residues 866–875 (ATLKSRKSNP) show a composition bias toward basic residues.

As to quaternary structure, serine/threonine-protein phosphatase 4 (PP4) occurs in different assemblies of the catalytic and one or more regulatory subunits. Component of the PP4 complex PPP4C-PPP4R4.

Its subcellular location is the cytoplasm. Putative regulatory subunit of serine/threonine-protein phosphatase 4. In Mus musculus (Mouse), this protein is Serine/threonine-protein phosphatase 4 regulatory subunit 4 (Ppp4r4).